We begin with the raw amino-acid sequence, 258 residues long: Imidazole glycerol phosphate synthase subunit HisF (258 aa).

Active-site residues include D12 and D131.

Belongs to the HisA/HisF family. In terms of assembly, heterodimer of HisH and HisF.

Its subcellular location is the cytoplasm. The enzyme catalyses 5-[(5-phospho-1-deoxy-D-ribulos-1-ylimino)methylamino]-1-(5-phospho-beta-D-ribosyl)imidazole-4-carboxamide + L-glutamine = D-erythro-1-(imidazol-4-yl)glycerol 3-phosphate + 5-amino-1-(5-phospho-beta-D-ribosyl)imidazole-4-carboxamide + L-glutamate + H(+). The protein operates within amino-acid biosynthesis; L-histidine biosynthesis; L-histidine from 5-phospho-alpha-D-ribose 1-diphosphate: step 5/9. In terms of biological role, IGPS catalyzes the conversion of PRFAR and glutamine to IGP, AICAR and glutamate. The HisF subunit catalyzes the cyclization activity that produces IGP and AICAR from PRFAR using the ammonia provided by the HisH subunit. The protein is Imidazole glycerol phosphate synthase subunit HisF of Sinorhizobium medicae (strain WSM419) (Ensifer medicae).